The chain runs to 229 residues: Clathrin light chain B (229 aa).

2 stretches are compositionally biased toward low complexity: residues 1 to 17 and 45 to 58; these read MAED…GAPE and GAPA…AQPG. The tract at residues 1 to 70 is disordered; that stretch reads MAEDFGFFSS…SGAGSEDMST (70 aa). 2 positions are modified to phosphoserine: S11 and S13. The segment at 93-155 is involved in binding clathrin heavy chain; sequence ADRLTQEPES…QVEKNKINNR (63 aa). The residue at position 187 (T187) is a Phosphothreonine. C199 and C209 form a disulfide bridge. At K204 the chain carries N6-acetyllysine. Phosphoserine is present on S217.

Belongs to the clathrin light chain family. In terms of assembly, clathrin coats are formed from molecules containing 3 heavy chains and 3 light chains. Interacts (via N-terminus) with HIP1. Interacts with HIP1R.

Its subcellular location is the cytoplasmic vesicle membrane. It localises to the membrane. The protein localises to the coated pit. In terms of biological role, clathrin is the major protein of the polyhedral coat of coated pits and vesicles. The protein is Clathrin light chain B (Cltb) of Mus musculus (Mouse).